The following is a 236-amino-acid chain: MGKRIISQNRGKGTPTYRAPSHRYRADIKHIKFSGDLVRGIVEDIMHDPARTAPVALVRLENGEKQYVLATEGTYIGQEIACGPAAEIQPGNTLPLASIPEGMPICNIESKPGHGGQFARASGVYGILVAHDVGATVVQLPSGEMKWLNPNCLATIGVVAGGGRTEKPLVKAGKSFYKYRSKAVKWPRVRGVAMNAVDHPFGGGGRQHPGRPKTVSRGTPPGRKVGSIAARRTGKR.

A disordered region spans residues 198-236; the sequence is DHPFGGGGRQHPGRPKTVSRGTPPGRKVGSIAARRTGKR.

Belongs to the universal ribosomal protein uL2 family. As to quaternary structure, part of the 50S ribosomal subunit. Forms a bridge to the 30S subunit in the 70S ribosome.

Functionally, one of the primary rRNA binding proteins. Required for association of the 30S and 50S subunits to form the 70S ribosome, for tRNA binding and peptide bond formation. It has been suggested to have peptidyltransferase activity; this is somewhat controversial. Makes several contacts with the 16S rRNA in the 70S ribosome. The polypeptide is Large ribosomal subunit protein uL2 (Methanothrix thermoacetophila (strain DSM 6194 / JCM 14653 / NBRC 101360 / PT) (Methanosaeta thermophila)).